The chain runs to 250 residues: Probable replication-associated protein repA2 (250 aa).

The protein belongs to the IncFII RepA family.

Its function is as follows. This protein is essential for plasmid replication; it is involved in copy control functions. This chain is Probable replication-associated protein repA2 (repA2), found in Buchnera aphidicola subsp. Schizaphis graminum (strain Sg).